The primary structure comprises 66 residues: Large ribosomal subunit protein bL31 (66 aa).

Zn(2+) contacts are provided by C16, C18, C36, and C39.

The protein belongs to the bacterial ribosomal protein bL31 family. Type A subfamily. In terms of assembly, part of the 50S ribosomal subunit. The cofactor is Zn(2+).

Functionally, binds the 23S rRNA. The polypeptide is Large ribosomal subunit protein bL31 (Trichlorobacter lovleyi (strain ATCC BAA-1151 / DSM 17278 / SZ) (Geobacter lovleyi)).